A 391-amino-acid chain; its full sequence is Secreted aspartic protease 1 (391 aa).

The N-terminal stretch at Met1–Ala18 is a signal peptide. The propeptide at Ser19–Arg50 is activation peptide. Asn40 carries an N-linked (GlcNAc...) asparagine glycan. The Peptidase A1 domain maps to Tyr64–Ala377. The active site involves Asp82. Asp82–Gly84 lines the pepstatin A pocket. Residues Cys97 and Cys109 are joined by a disulfide bond. A pepstatin A-binding site is contributed by Gly135–Asp136. Positions 241 and 263 each coordinate Zn(2+). Residue Asp267 is part of the active site. Residue Asp267–Thr271 participates in pepstatin A binding. The cysteines at positions 305 and 343 are disulfide-linked.

Belongs to the peptidase A1 family. As to quaternary structure, monomer.

Its subcellular location is the secreted. It carries out the reaction Preferential cleavage at the carboxyl of hydrophobic amino acids, but fails to cleave 15-Leu-|-Tyr-16, 16-Tyr-|-Leu-17 and 24-Phe-|-Phe-25 of insulin B chain. Activates trypsinogen, and degrades keratin.. With respect to regulation, inhibited by pepstatin A analogs and squash aspartic peptidase inhibitor (SQAPI). Secreted aspartic peptidases (SAPs) are a group of ten acidic hydrolases considered as key virulence factors. These enzymes supply the fungus with nutrient amino acids as well as are able to degrade the selected host's proteins involved in the immune defense. Induces host inflammatory cytokine production in a proteolytic activity-independent way. Plays a role in tissue damage during superficial infection. Moreover, acts toward human hemoglobin though limited proteolysis to generate a variety of antimicrobial hemocidins, enabling to compete with the other microorganisms of the same physiological niche using the microbicidal peptides generated from the host protein. In terms of biological role, plays a key role in defense against host by cleaving histatin-5 (Hst 5), a peptide from human saliva that carries out fungicidal activity. The cleavage rate decreases in an order of SAP2 &gt; SAP9 &gt; SAP3 &gt; SAP7 &gt; SAP4 &gt; SAP1 &gt; SAP8. The first cleavage occurs between residues 'Lys-17' and 'His-18' of Hst 5, giving DSHAKRHHGYKRKFHEK and HHSHRGY peptides. Further fragmentation by SAP1 results in AKRHHGYKRKFHEK and AKRHHGY products. This is Secreted aspartic protease 1 from Candida albicans (strain SC5314 / ATCC MYA-2876) (Yeast).